The following is a 542-amino-acid chain: Apolipoprotein N-acyltransferase (542 aa).

A run of 6 helical transmembrane segments spans residues 24 to 44, 54 to 74, 85 to 105, 116 to 136, 160 to 180, and 190 to 210; these read VVASVVSCICGYSLLWAGLFA, VWCIAFIWTWTVEGAHFSWML, FVWGILLSYLATLFASFSCLV, ALVWLPGVWVAIEAIRYYGLL, FFGWAGQSFLVIAANICCFAV, and GLWLTLCAFPYLLGGAHYEYL. In terms of domain architecture, CN hydrolase spans 220 to 499; it reads LRVAIVQPGY…TGVLQVSVPL (280 aa). Glutamate 264 functions as the Proton acceptor in the catalytic mechanism. Lysine 349 is an active-site residue. The Nucleophile role is filled by cysteine 404. A helical membrane pass occupies residues 509 to 529; that stretch reads LGDAPLLLIAVCSVIGAIAYF.

This sequence belongs to the CN hydrolase family. Apolipoprotein N-acyltransferase subfamily.

It localises to the cell inner membrane. It carries out the reaction N-terminal S-1,2-diacyl-sn-glyceryl-L-cysteinyl-[lipoprotein] + a glycerophospholipid = N-acyl-S-1,2-diacyl-sn-glyceryl-L-cysteinyl-[lipoprotein] + a 2-acyl-sn-glycero-3-phospholipid + H(+). Its pathway is protein modification; lipoprotein biosynthesis (N-acyl transfer). Functionally, catalyzes the phospholipid dependent N-acylation of the N-terminal cysteine of apolipoprotein, the last step in lipoprotein maturation. This chain is Apolipoprotein N-acyltransferase, found in Chlamydia trachomatis serovar D (strain ATCC VR-885 / DSM 19411 / UW-3/Cx).